The chain runs to 827 residues: Periplasmic nitrate reductase (827 aa).

The segment at residues 1–32 (MTLSRRAFIKQTAAATAASAAGVVLPGVDALA) is a signal peptide (tat-type signal). A 4Fe-4S Mo/W bis-MGD-type domain is found at 37-93 (LTWSKAPCRFCGTGCGVSVGVKNGKVVATQGDPQAEVNRGLNCVKGYFLSKIMYGQD). Residues C44, C47, C51, and C79 each coordinate [4Fe-4S] cluster. Mo-bis(molybdopterin guanine dinucleotide) is bound by residues K81, Q148, N173, C177, 241–245 (STFEH), 260–262 (QSD), M371, Q375, N481, 507–508 (SD), K530, D557, and 717–726 (TGRVLEHWHS). Substrate is bound at residue W793. Mo-bis(molybdopterin guanine dinucleotide) contacts are provided by N801 and K818.

Belongs to the prokaryotic molybdopterin-containing oxidoreductase family. NasA/NapA/NarB subfamily. Component of the periplasmic nitrate reductase NapAB complex composed of NapA and NapB. [4Fe-4S] cluster is required as a cofactor. Mo-bis(molybdopterin guanine dinucleotide) serves as cofactor. In terms of processing, predicted to be exported by the Tat system. The position of the signal peptide cleavage has not been experimentally proven.

Its subcellular location is the periplasm. It catalyses the reaction 2 Fe(II)-[cytochrome] + nitrate + 2 H(+) = 2 Fe(III)-[cytochrome] + nitrite + H2O. Its function is as follows. Catalytic subunit of the periplasmic nitrate reductase complex NapAB. Receives electrons from NapB and catalyzes the reduction of nitrate to nitrite. This is Periplasmic nitrate reductase from Paraburkholderia xenovorans (strain LB400).